The following is a 128-amino-acid chain: Small ribosomal subunit protein uS9 (128 aa).

It belongs to the universal ribosomal protein uS9 family.

The chain is Small ribosomal subunit protein uS9 from Amoebophilus asiaticus (strain 5a2).